Reading from the N-terminus, the 2696-residue chain is Protein ILITYHIA (2696 aa).

Positions 1–18 (MSYSMVNASSAVSSPETA) are enriched in polar residues. Residues 1–26 (MSYSMVNASSAVSSPETAKNSDEPPP) are disordered. HEAT repeat units lie at residues 162–204 (DIAP…MKTF), 253–290 (STQASLLRIIMESSFRMRRACKRFMFHLFSQSQAIYSL), 303–340 (KDSPELLGLLLEFSCSSPALFEQSKAIFVDIYVKDVLN), 364–400 (EFQTVILPAAVKMLKRNPEIVLESVGFLLANVNIDLS), 401–438 (KYALELLPVILPQARHTDEDRRLGALSMVMCLSEKSSN), 487–525 (SLSRTICSFLIACYKDEGNEDVKLSILSAVASWASRSSV), 526–562 (AIQPNLVSFIAAGLKEKEALRRGHLRCVRIICRNPDT), 564–601 (SQISDLLSPLIQLVKTGFTKAVQRLDGIYALLIVSKIA), and 642–677 (VVCVDLLEVLLVEHSSRVLEAFSLKSLSQLLLFLLC). Residues 901-941 (KQEPSSNHSLKKGLASRETANSGRRDTAKLTKKADKGKTAK) form a disordered region. Positions 923–941 (GRRDTAKLTKKADKGKTAK) are enriched in basic and acidic residues. HEAT repeat units follow at residues 985–1021 (HSQLPFLATFLDPLLRSPIVSAAAFENLVKLARCTVQ), 1082–1118 (DTFTFIFPVLYHVLGVVPAYQASVGPALNELCLGLQA), 1188–1225 (HDLGTDYSGIFKALSHINLNVRLAAAEALADALHESPS), 1273–1311 (KDLPAVMTFLISRALADPNTDVRGKMINAGIMIIDKHGK), 1315–1355 (SLLF…HLAR), 1358–1395 (PKVHNVVEKLLEVLNTPSESVQRAVSTCLSPLVLSKQE), 1397–1433 (APALFLRLLDKLMKSDKYGERRGAAFGLAGVVMGFGI), 1436–1474 (LKKYGLIVTLQEALIDRNSAKRREGALLAFECLCEKLGK), 1478–1515 (PYVIKMLPLLLVSFSDQVGAVREAAECAARAMMSQLSA), 1516–1553 (YGVKLVLPSLLKGLEDKAWRTKQSSVQLLGAMAFCAPQ), 1564–1600 (PKLTEVFKTIQVLTDTHPKVQSAGQLALQQVGSVIKN), 1601–1638 (PEISSLVPTLLLALTDPNEYTRHALDTLLQTTFVNSVD), 1640–1677 (PSLALLVPIVHRGLRERSSETKKKASQIVGNMCSLVTE), 1683–1720 (PYIGLLLPEVKKVLVDPIPEVRSVAARAVGSLIRGMGE), 1722–1759 (NFPDLVPWLFETLKSDTSNVERYGAAQGLSEVIAALGT), 1761–1797 (YFENILPDLIRHCSHQKASVRDGYLTLFKFLPRSLGA), 1801–1838 (KYLQLVLPAILDGLADENESVRDAALGAGHVLVEHHAT), and 1840–1876 (SLPLLLPAVEDGIFNDNWRIRQSSVELLGDLLFKVAG). Serine 1887 is modified (phosphoserine). HEAT repeat units follow at residues 1908 to 1945 (DKRNEVLAALYMVRTDVSLSVRQAALHVWKTIVANTPK), 1949 to 1986 (EIMPILMSTLISSLASPSSERRQVAGRSLGELVRKLGE), 1988 to 2024 (VLPLIIPILSKGLKDPDVDKRQGVCIGLNEVMASAGR), 2029 to 2066 (SFMDQLIPTIRTALCDSALEVRESAGLAFSTLYKSAGL), 2067 to 2102 (QAMDEIIPTLLEALEDDEMSTTALDGLKQIISVRTA), 2104 to 2137 (VLPHILPKLVHLPLSALNAHALGALAEVAGAGFN), 2138 to 2175 (THLGTILPALLSAMGGENKEVQELAQEAAERVVLVIDE), 2177 to 2213 (GVETLLSELLKGVSDSQASIRRSSAYLIGYFFKSSKL), 2217 to 2254 (DEAPNMISTLIVMLSDSDSTTVAVSWEALARVIGSVPK), 2258 to 2292 (PSYIKLVRDAVSTARDKERRKRKGGYVVIPGLCLP), 2293 to 2330 (KSLKPLLPVFLQGLISGSAELREQAAIGLGELIEVTSE), 2335 to 2373 (EFVIPITGPLIRIIGDRFPWQVKSAILATLIILIQRGGM), 2377 to 2414 (PFLPQLQTTFVKCLQDSTRTIRSSAAVALGKLSALSTR), 2416 to 2450 (DPLVGDLMTSFQAADSGVREAILSAMRGVIKHAGK), 2455 to 2492 (AVRVRIFDLLKDLMHHEDDQVRISATSMLGVLSQYLEA), 2494 to 2530 (QLSVLLQEVNDLSASQNWGARHGSVLCISSLLKHNPS), 2536 to 2573 (SLFSSMLNSLKSSLKDEKFPLRESSTKALGRLLLKQLA), 2580 to 2617 (KVVIDVLSSIVSALHDDSSEVRRRALSSLKAFAKDNPS), and 2620 to 2658 (MANISVIGPPLAECLKDGNTPVRLAAERCALHVFQLTKG).

Belongs to the GCN1 family.

In terms of biological role, involved in immunity against bacterial infection and in non-host resistance. Required for embryo development. Required for systemic acquired resistance, but functions in an salicylic acid-independent manner. Required for bacterium-triggered stomatal closure response. This is Protein ILITYHIA from Arabidopsis thaliana (Mouse-ear cress).